We begin with the raw amino-acid sequence, 1729 residues long: 1,3-beta-glucan synthase component bgs1 (1729 aa).

Ser-23 carries the post-translational modification Phosphoserine. A run of 6 helical transmembrane segments spans residues 378-398 (WTAC…AVVF), 416-436 (SMLL…FIFA), 448-468 (LVVG…YSIT), 503-523 (FVSW…SYFF), 546-566 (YILG…LLYL), and 577-597 (YLWY…CLGI). 2 positions are modified to phosphoserine: Ser-784 and Ser-788. A run of 8 helical transmembrane segments spans residues 1180-1200 (MVIM…GAMY), 1237-1257 (ILSI…CELG), 1337-1357 (MLLF…WITL), 1440-1460 (YGEI…FLFI), 1484-1504 (VAPL…GIML), 1515-1535 (YGVY…VVVF), 1550-1572 (LLGF…ICFL), and 1678-1698 (ATLY…PFVF).

It belongs to the glycosyltransferase 48 family. In terms of assembly, component of the 1,3-beta-glucan synthase (GS) complex, composed of at least the alternate catalytic subunits bgs1, bgs2, bgs3, and bgs4, and a regulatory subunit chr4.

Its subcellular location is the cell membrane. The protein resides in the cell septum. It catalyses the reaction [(1-&gt;3)-beta-D-glucosyl](n) + UDP-alpha-D-glucose = [(1-&gt;3)-beta-D-glucosyl](n+1) + UDP + H(+). Alternate catalytic subunit of the 1,3-beta-glucan synthase (GS) complex. Synthesizes 1,3-beta-glucan, a major structural component of the fungal cell wall. Required for the assembly of the division septum and maintenance of cell polarity. In Schizosaccharomyces pombe (strain 972 / ATCC 24843) (Fission yeast), this protein is 1,3-beta-glucan synthase component bgs1 (bgs1).